We begin with the raw amino-acid sequence, 184 residues long: Acetyl-CoA decarbonylase/synthase complex subunit epsilon 1 (184 aa).

It belongs to the CdhB family. Heterotetramer of two alpha and two epsilon subunits. The ACDS complex is made up of alpha, epsilon, beta, gamma and delta subunits with a probable stoichiometry of (alpha(2)epsilon(2))(4)-beta(8)-(gamma(1)delta(1))(8).

Part of a complex that catalyzes the reversible cleavage of acetyl-CoA, allowing autotrophic growth from CO(2). The alpha-epsilon subcomponent functions as a carbon monoxide dehydrogenase. The precise role of the epsilon subunit is unclear; it may have a stabilizing role within the alpha(2)epsilon(2) component and/or be involved in electron transfer to FAD during a potential FAD-mediated CO oxidation. This is Acetyl-CoA decarbonylase/synthase complex subunit epsilon 1 (cdhB1) from Archaeoglobus fulgidus (strain ATCC 49558 / DSM 4304 / JCM 9628 / NBRC 100126 / VC-16).